The primary structure comprises 198 residues: Anthranilate synthase component 2 (198 aa).

In terms of domain architecture, Glutamine amidotransferase type-1 spans 1-194; the sequence is MILIIDNYDS…VNQVNENKES (194 aa). 50–52 provides a ligand contact to L-glutamine; sequence GPG. Cys77 acts as the Nucleophile; for GATase activity in catalysis. L-glutamine-binding positions include Gln81 and 128 to 129; that span reads SI. Catalysis depends on for GATase activity residues His168 and Glu170.

In terms of assembly, heterotetramer consisting of two non-identical subunits: a beta subunit (TrpG) and a large alpha subunit (TrpE).

It catalyses the reaction chorismate + L-glutamine = anthranilate + pyruvate + L-glutamate + H(+). The protein operates within amino-acid biosynthesis; L-tryptophan biosynthesis; L-tryptophan from chorismate: step 1/5. Part of a heterotetrameric complex that catalyzes the two-step biosynthesis of anthranilate, an intermediate in the biosynthesis of L-tryptophan. In the first step, the glutamine-binding beta subunit (TrpG) of anthranilate synthase (AS) provides the glutamine amidotransferase activity which generates ammonia as a substrate that, along with chorismate, is used in the second step, catalyzed by the large alpha subunit of AS (TrpE) to produce anthranilate. In the absence of TrpG, TrpE can synthesize anthranilate directly from chorismate and high concentrations of ammonia. This chain is Anthranilate synthase component 2 (trpG), found in Lactococcus lactis subsp. lactis (strain IL1403) (Streptococcus lactis).